Consider the following 379-residue polypeptide: Cytochrome b (379 aa).

Transmembrane regions (helical) follow at residues 33 to 53 (FGSL…FLAM), 77 to 98 (WLIR…FIHV), 113 to 133 (WNIG…GYVL), and 178 to 198 (FFAF…VHLL). Heme b contacts are provided by histidine 83 and histidine 97. The heme b site is built by histidine 182 and histidine 196. Histidine 201 provides a ligand contact to a ubiquinone. The next 4 helical transmembrane spans lie at 226–246 (TKDL…TLFF), 288–308 (LGGV…PLLN), 320–340 (ITQT…WIGG), and 347–367 (FTTI…ILIP).

The protein belongs to the cytochrome b family. As to quaternary structure, the cytochrome bc1 complex contains 11 subunits: 3 respiratory subunits (MT-CYB, CYC1 and UQCRFS1), 2 core proteins (UQCRC1 and UQCRC2) and 6 low-molecular weight proteins (UQCRH/QCR6, UQCRB/QCR7, UQCRQ/QCR8, UQCR10/QCR9, UQCR11/QCR10 and a cleavage product of UQCRFS1). This cytochrome bc1 complex then forms a dimer. Heme b serves as cofactor.

It is found in the mitochondrion inner membrane. In terms of biological role, component of the ubiquinol-cytochrome c reductase complex (complex III or cytochrome b-c1 complex) that is part of the mitochondrial respiratory chain. The b-c1 complex mediates electron transfer from ubiquinol to cytochrome c. Contributes to the generation of a proton gradient across the mitochondrial membrane that is then used for ATP synthesis. The protein is Cytochrome b (MT-CYB) of Akodon azarae (Azara's grass mouse).